The primary structure comprises 393 residues: Staphopain B (393 aa).

The N-terminal stretch at 1-36 (MNSSCKSRVFNIISIIMVSMLILSLGAFANNNKAKA) is a signal peptide. A propeptide spanning residues 37–219 (DSHSKQLEIN…KVEENEAIQE (183 aa)) is cleaved from the precursor. Active-site residues include Cys-243, His-340, and Asn-360.

The protein belongs to the peptidase C47 family. In the cytoplasm, prematurely activated/folded SspB forms a stable non-covalent complex with SspC. In terms of processing, proteolytically cleaved by staphylococcal serine protease (SspA).

It is found in the secreted. Its activity is regulated as follows. Prematurely activated/folded staphopain B is inhibited by staphostatin B (SspC), which is probably required to protect staphylococcal cytoplasmic proteins from degradation by SspB. Also inactivated by E-64 and stimulated by EDTA. Cysteine protease that plays an important role in the inhibition of host innate immune response. Degrades host elastin, fibrogen, fibronectin and kininogen. Blocks phagocytosis of opsonised S.aureus by neutrophils and monocytes by inducing their death in a proteolytic activity-dependent manner. Decreases surface expression of the 'don't eat me' signal CD31 on neutrophils. Cleaves host galectin-3/LGALS3, thereby inhibiting the neutrophil-activating ability of the lectin. In Staphylococcus aureus (strain NCTC 8325 / PS 47), this protein is Staphopain B (sspB).